Reading from the N-terminus, the 589-residue chain is Mitogen-activated protein kinase 8 (589 aa).

The tract at residues 18–56 is disordered; sequence RPSSSSSSSSSNNNNNNHEQPIFNSSSFSSSSNPNHSAN. Low complexity-rich tracts occupy residues 20-34 and 41-56; these read SSSS…NNNN and NSSS…HSAN. Residues 104 to 395 enclose the Protein kinase domain; that stretch reads YQIQEVVGKG…AEDALADPYF (292 aa). ATP contacts are provided by residues 110–118 and lysine 133; that span reads VGKGSYGVV. Residue aspartate 230 is the Proton acceptor of the active site. At threonine 266 the chain carries Phosphothreonine. Residues 266–268 carry the TXY motif; that stretch reads TDY. Tyrosine 268 carries the post-translational modification Phosphotyrosine. At threonine 271 the chain carries Phosphothreonine. The tract at residues 474 to 589 is disordered; the sequence is NQGKPGAAGG…TDKVASLHNS (116 aa).

The protein belongs to the protein kinase superfamily. CMGC Ser/Thr protein kinase family. MAP kinase subfamily. In terms of assembly, interacts with CAM3, CAM4 and CAM7 in an calcium-dependent manner. Post-translationally, dually phosphorylated on Thr-266 and Tyr-268, which activates the enzyme. Autophosphorylated. In terms of tissue distribution, ubiquitous.

The catalysed reaction is L-seryl-[protein] + ATP = O-phospho-L-seryl-[protein] + ADP + H(+). It carries out the reaction L-threonyl-[protein] + ATP = O-phospho-L-threonyl-[protein] + ADP + H(+). Its activity is regulated as follows. Activated by threonine and tyrosine phosphorylation. Activated by two independent mechanisms, the binding of CAMs in a calcium-dependent manner and the phosphorylation by MAP kinase kinase MKK3. Activated in response to mechanical wounding, hydrogen peroxide and jasmonic acid (JA). In terms of biological role, MKK3-MPK8 and CAMs-MPK8 modules negatively regulates ROS accumulation through controlling expression of the RBOHD gene during wounding. The polypeptide is Mitogen-activated protein kinase 8 (MPK8) (Arabidopsis thaliana (Mouse-ear cress)).